Here is a 156-residue protein sequence, read N- to C-terminus: Large ribosomal subunit protein bL17 (156 aa).

Residues 127-156 (RATRAAASKKAAEEKAAEAAEEKDEAAEEK) form a disordered region. Residues 136–146 (KAAEEKAAEAA) show a composition bias toward basic and acidic residues. Residues 147 to 156 (EEKDEAAEEK) show a composition bias toward acidic residues.

Belongs to the bacterial ribosomal protein bL17 family. As to quaternary structure, part of the 50S ribosomal subunit. Contacts protein L32.

In Corynebacterium urealyticum (strain ATCC 43042 / DSM 7109), this protein is Large ribosomal subunit protein bL17.